The chain runs to 93 residues: Exodeoxyribonuclease 7 small subunit (93 aa).

The disordered stretch occupies residues 1-22 (MAKTASPGATPPGNGAEPLPDN).

Belongs to the XseB family. As to quaternary structure, heterooligomer composed of large and small subunits.

Its subcellular location is the cytoplasm. It carries out the reaction Exonucleolytic cleavage in either 5'- to 3'- or 3'- to 5'-direction to yield nucleoside 5'-phosphates.. Functionally, bidirectionally degrades single-stranded DNA into large acid-insoluble oligonucleotides, which are then degraded further into small acid-soluble oligonucleotides. The sequence is that of Exodeoxyribonuclease 7 small subunit from Burkholderia multivorans (strain ATCC 17616 / 249).